Here is a 217-residue protein sequence, read N- to C-terminus: Probable transaldolase (217 aa).

The active-site Schiff-base intermediate with substrate is the K83.

Belongs to the transaldolase family. Type 3B subfamily.

It is found in the cytoplasm. It catalyses the reaction D-sedoheptulose 7-phosphate + D-glyceraldehyde 3-phosphate = D-erythrose 4-phosphate + beta-D-fructose 6-phosphate. It participates in carbohydrate degradation; pentose phosphate pathway; D-glyceraldehyde 3-phosphate and beta-D-fructose 6-phosphate from D-ribose 5-phosphate and D-xylulose 5-phosphate (non-oxidative stage): step 2/3. Functionally, transaldolase is important for the balance of metabolites in the pentose-phosphate pathway. In Clostridium botulinum (strain Okra / Type B1), this protein is Probable transaldolase.